Here is a 142-residue protein sequence, read N- to C-terminus: Small ribosomal subunit protein bS18c (142 aa).

Residues 1-21 (MDRITGPFRKSKKSFRKPLPP) form a disordered region.

This sequence belongs to the bacterial ribosomal protein bS18 family. In terms of assembly, part of the 30S ribosomal subunit.

It is found in the plastid. The sequence is that of Small ribosomal subunit protein bS18c from Cuscuta gronovii (Common dodder).